A 453-amino-acid polypeptide reads, in one-letter code: UDP-N-acetylmuramoylalanine--D-glutamate ligase (453 aa).

Position 120–126 (120–126 (GSNGKST)) interacts with ATP.

This sequence belongs to the MurCDEF family.

It is found in the cytoplasm. It carries out the reaction UDP-N-acetyl-alpha-D-muramoyl-L-alanine + D-glutamate + ATP = UDP-N-acetyl-alpha-D-muramoyl-L-alanyl-D-glutamate + ADP + phosphate + H(+). It participates in cell wall biogenesis; peptidoglycan biosynthesis. Functionally, cell wall formation. Catalyzes the addition of glutamate to the nucleotide precursor UDP-N-acetylmuramoyl-L-alanine (UMA). The polypeptide is UDP-N-acetylmuramoylalanine--D-glutamate ligase (Nitrosococcus oceani (strain ATCC 19707 / BCRC 17464 / JCM 30415 / NCIMB 11848 / C-107)).